We begin with the raw amino-acid sequence, 408 residues long: UPF0496 protein At5g66670 (408 aa).

A run of 2 helical transmembrane segments spans residues 239-259 and 262-282; these read VVFA…AAMM and PVLS…GMWC.

This sequence belongs to the UPF0496 family.

It localises to the membrane. The protein is UPF0496 protein At5g66670 of Arabidopsis thaliana (Mouse-ear cress).